The sequence spans 300 residues: Ribosomal protein L11 methyltransferase (300 aa).

Residues Thr152, Gly173, Asp195, and Asn234 each coordinate S-adenosyl-L-methionine.

The protein belongs to the methyltransferase superfamily. PrmA family.

The protein resides in the cytoplasm. It catalyses the reaction L-lysyl-[protein] + 3 S-adenosyl-L-methionine = N(6),N(6),N(6)-trimethyl-L-lysyl-[protein] + 3 S-adenosyl-L-homocysteine + 3 H(+). Methylates ribosomal protein L11. In Burkholderia ambifaria (strain MC40-6), this protein is Ribosomal protein L11 methyltransferase.